Consider the following 220-residue polypeptide: Small ribosomal subunit protein mS42 (220 aa).

The protein belongs to the mitochondrion-specific ribosomal protein mS42 family. In terms of assembly, component of the mitochondrial small ribosomal subunit (mt-SSU). Mature yeast 74S mitochondrial ribosomes consist of a small (37S) and a large (54S) subunit. The 37S small subunit contains a 15S ribosomal RNA (15S mt-rRNA) and at least 32 different proteins. The 54S large subunit contains a 21S rRNA (21S mt-rRNA) and at least 45 different proteins. mS43 forms a dimer with mS42, building a large protuberance adjacent to the mRNA channel exit in the mt-SSU body.

It localises to the mitochondrion. Its function is as follows. Component of the mitochondrial ribosome (mitoribosome), a dedicated translation machinery responsible for the synthesis of mitochondrial genome-encoded proteins, including at least some of the essential transmembrane subunits of the mitochondrial respiratory chain. The mitoribosomes are attached to the mitochondrial inner membrane and translation products are cotranslationally integrated into the membrane. The protein is Small ribosomal subunit protein mS42 of Schizosaccharomyces pombe (strain 972 / ATCC 24843) (Fission yeast).